A 256-amino-acid polypeptide reads, in one-letter code: Mannose-specific lectin 1 (256 aa).

An N-terminal signal peptide occupies residues 1–23 (MAKLLLFLLPAILGLLVPRSAVA). Bulb-type lectin domains lie at 26 to 131 (TNYL…PWVR) and 145 to 252 (NNLL…SKRS). Residues 51-55 (QDDCN), Tyr59, Trp63, Gln64, 170-174 (QGDCN), Tyr178, and 182-185 (YGWQ) contribute to the beta-D-mannose site. A Carbohydrate-binding motif 1 motif is present at residues 51–59 (QDDCNLVLY). Disulfide bonds link Cys54–Cys74 and Cys173–Cys195. The short motif at 170–178 (QGDCNLVLY) is the Carbohydrate-binding motif 2 element.

In terms of assembly, forms heterodimers.

The protein resides in the secreted. Functionally, mannose-specific lectin. Shows agglutinating activity towards erythrocytes from rabbit. The polypeptide is Mannose-specific lectin 1 (Remusatia vivipara (Hitchhiker elephant ear)).